The sequence spans 436 residues: Hydrolyase ccsE (436 aa).

S249 functions as the Nucleophile in the catalytic mechanism.

Belongs to the AB hydrolase superfamily. FUS2 hydrolase family. As to quaternary structure, homodimer.

The protein operates within mycotoxin biosynthesis. In terms of biological role, hydrolyase; part of the gene cluster that mediates the biosynthesis of a family of the mycotoxins cytochalasins E and K. The hybrid PKS-NRPS synthetase ccsA and the enoyl reductase ccsC are responsible for fusion of phenylalanine with an octaketide backbone and subsequent release of the stable tetramic acid precursor. The polyketide synthase module (PKS) of the PKS-NRPS ccsA is responsible for the synthesis of the octaketide backbone. The downstream nonribosomal peptide synthetase (NRPS) amidates the carboxyl end of the octaketide with a phenylalanine. A reductase-like domain (R) at the C-terminus catalyzes the reductive release of the polyketide-amino acid intermediate. Because ccsA lacks a designated enoylreductase (ER) domain, the required activity is provided the enoyl reductase ccsC. Upon formation of the 11-membered carbocycle-fused perhydroisoindolone intermediate, a number of oxidative steps are required to afford the final cytochalasin E and K, including two hydroxylations at C17 and C18, one alcohol oxidation at C17, one epoxidation at C6 and C7 and two Baeyer-Villiger oxidations. The oxidative modification at C17, C18 and the C6-C7 epoxidation are likely to be catalyzed by the two cytochrome P450 oxygenases ccsD and ccsG. CcsD may be responsible for the epoxidation of the C6-C7 double bond. CcsG may be responsible for the successive oxidative modifications at C17 and C18. The double Baeyer-Villiger oxidations of ketocytochalasin to precytochalasin and cytochalasin Z(16) are among the final steps leading to cytochalasin E and K and are catalyzed by ccsB. The first oxygen insertion step follows that of the classic BVMO mechanism, generating the ester precytochalasin. Release of precytochalasin into an aqueous environment can generate the shunt product iso-precytochalasin through spontaneous isomerization. Alternatively, precytochalasin can undergo further oxidation by ccsB to yield the in-line carbonate-containing cytochalasin Z(16). Cytochalasin Z(16) is a precursor to cytochalasin E and cytochalasin K, whereas iso-precytochalasin is a precursor to cytochalasin Z(17) and rosellichalasin. The hydrolyase ccsE may catalyze hydrolysis of epoxide bond in cytochalasin E to afford cytochalasin K. The function of ccsF has not been assigned but it may play a role in post-PKS-NRPS biosynthetic step, resistance or transport of cytochalasins and related PKS-NRPS products. This is Hydrolyase ccsE from Aspergillus clavatus (strain ATCC 1007 / CBS 513.65 / DSM 816 / NCTC 3887 / NRRL 1 / QM 1276 / 107).